The primary structure comprises 288 residues: Fibroblast growth factor 2 (288 aa).

Residues 1 to 133 are disordered; the sequence is MVGVGGGDVE…RGSRPGPAGT (133 aa). Positions 1 to 142 are cleaved as a propeptide — or 93, or 124, or 125, or 131, or 161; sequence MVGVGGGDVE…TMAAGSITTL (142 aa). A compositionally biased stretch (low complexity) spans 52-64; sequence SVNPRSRAAGSPR. Positions 68–84 are enriched in basic and acidic residues; the sequence is RRTEERPSGSRLGDRGR. Omega-N-methylarginine; alternate is present on residues arginine 108, arginine 110, and arginine 112. Arginine 108, arginine 110, and arginine 112 each carry symmetric dimethylarginine; alternate. Positions 113 to 132 are enriched in low complexity; sequence GTAAPRAAPAARGSRPGPAG. Asparagine 169 contributes to the heparin binding site. The Cell attachment site; atypical motif lies at 179–181; the sequence is DGR. Tyrosine 215 carries the phosphotyrosine; by TEC modification. The Cell attachment site; atypical signature appears at 221 to 223; it reads DGR. Lysine 228 is covalently cross-linked (Glycyl lysine isopeptide (Lys-Gly) (interchain with G-Cter in SUMO1)). The interval 261 to 277 is heparin-binding; it reads KRTGQYKLGSKTGPGQK.

It belongs to the heparin-binding growth factors family. In terms of assembly, monomer. Homodimer. Interacts with FGFR1, FGFR2, FGFR3 and FGFR4. Affinity between fibroblast growth factors (FGFs) and their receptors is increased by heparan sulfate glycosaminoglycans that function as coreceptors. Interacts with CSPG4, FGFBP1 and TEC. Found in a complex with FGFBP1, FGF1 and FGF2. Interacts with FGFBP3. Interacts with integrin ITGAV:ITGB3; the interaction is required for FGF2 signaling. Interacts with SNORC (via the extracellular domain). Interacts with glypican GPC3. Post-translationally, phosphorylation at Tyr-215 regulates FGF2 unconventional secretion. In terms of processing, several N-termini starting at positions 94, 125, 126, 132, 143 and 162 have been identified by direct sequencing. As to expression, expressed in granulosa and cumulus cells. Expressed in hepatocellular carcinoma cells, but not in non-cancerous liver tissue.

The protein localises to the secreted. It localises to the nucleus. Acts as a ligand for FGFR1, FGFR2, FGFR3 and FGFR4. Also acts as an integrin ligand which is required for FGF2 signaling. Binds to integrin ITGAV:ITGB3. Plays an important role in the regulation of cell survival, cell division, cell differentiation and cell migration. Functions as a potent mitogen in vitro. Can induce angiogenesis. Mediates phosphorylation of ERK1/2 and thereby promotes retinal lens fiber differentiation. This chain is Fibroblast growth factor 2 (FGF2), found in Homo sapiens (Human).